The chain runs to 387 residues: Chaperone protein DnaJ (387 aa).

A J domain is found at 6–70; the sequence is DYYEILGLSR…EKRAQYDRFG (65 aa). Residues 130–212 form a CR-type zinc finger; it reads GVRKDIDVPR…CSGTGRVRNT (83 aa). The Zn(2+) site is built by C143, C146, C160, C163, C186, C189, C200, and C203. 4 CXXCXGXG motif repeats span residues 143-150, 160-167, 186-193, and 200-207; these read CSNCSGTG, CPTCGGTG, CSTCRGKG, and CPVCSGTG. Positions 143-162 are disordered; sequence CSNCSGTGARPGTSPKRCPT.

The protein belongs to the DnaJ family. In terms of assembly, homodimer. It depends on Zn(2+) as a cofactor.

It is found in the cytoplasm. Functionally, participates actively in the response to hyperosmotic and heat shock by preventing the aggregation of stress-denatured proteins and by disaggregating proteins, also in an autonomous, DnaK-independent fashion. Unfolded proteins bind initially to DnaJ; upon interaction with the DnaJ-bound protein, DnaK hydrolyzes its bound ATP, resulting in the formation of a stable complex. GrpE releases ADP from DnaK; ATP binding to DnaK triggers the release of the substrate protein, thus completing the reaction cycle. Several rounds of ATP-dependent interactions between DnaJ, DnaK and GrpE are required for fully efficient folding. Also involved, together with DnaK and GrpE, in the DNA replication of plasmids through activation of initiation proteins. In Methanosarcina thermophila, this protein is Chaperone protein DnaJ.